We begin with the raw amino-acid sequence, 141 residues long: uncharacterized protein (141 aa).

Positions 10–117 (IFCDIVQGSI…VPKYETGKGF (108 aa)) constitute an HIT domain. Residues 102-106 (HFHLH) carry the Histidine triad motif motif.

This is an uncharacterized protein from Mycoplasma genitalium (strain ATCC 33530 / DSM 19775 / NCTC 10195 / G37) (Mycoplasmoides genitalium).